Reading from the N-terminus, the 405-residue chain is Homocitrate synthase AksA (405 aa).

A Pyruvate carboxyltransferase domain is found at 23 to 274; that stretch reads IEICDVTLRD…IERYDTTKLT (252 aa).

Belongs to the alpha-IPM synthase/homocitrate synthase family.

The catalysed reaction is acetyl-CoA + 2-oxoglutarate + H2O = (2R)-homocitrate + CoA + H(+). The enzyme catalyses 2-oxoadipate + acetyl-CoA + H2O = (R)-dihomocitrate + CoA + H(+). It catalyses the reaction 2-oxoheptanedioate + acetyl-CoA + H2O = (R)-trihomocitrate + CoA + H(+). The protein operates within organic acid metabolism; 2-oxosuberate biosynthesis. Functionally, catalyzes the condensation of alpha-ketoglutarate and acetyl-CoA to form (R)-homocitrate. Can also catalyze the condensation of alpha-ketoadipate with acetyl-CoA to form (R)-homo(2)citrate, and the condensation of alpha-ketopimelate with acetyl-CoA to form (R)-homo(3)citrate. These reactions are part of the biosynthesis pathway of coenzyme B and biotin. The sequence is that of Homocitrate synthase AksA (aksA) from Methanosarcina acetivorans (strain ATCC 35395 / DSM 2834 / JCM 12185 / C2A).